The sequence spans 257 residues: Type III pantothenate kinase (257 aa).

6–13 (DAGNTNIV) lines the ATP pocket. Substrate is bound by residues Tyr-100 and 107–110 (GADR). Residue Asp-109 is the Proton acceptor of the active site. Residue Asp-129 participates in K(+) binding. An ATP-binding site is contributed by Thr-132. Residue Thr-184 participates in substrate binding.

The protein belongs to the type III pantothenate kinase family. Homodimer. Requires NH4(+) as cofactor. K(+) is required as a cofactor.

The protein resides in the cytoplasm. It carries out the reaction (R)-pantothenate + ATP = (R)-4'-phosphopantothenate + ADP + H(+). It participates in cofactor biosynthesis; coenzyme A biosynthesis; CoA from (R)-pantothenate: step 1/5. In terms of biological role, catalyzes the phosphorylation of pantothenate (Pan), the first step in CoA biosynthesis. The chain is Type III pantothenate kinase from Clostridium botulinum (strain Alaska E43 / Type E3).